Here is a 353-residue protein sequence, read N- to C-terminus: UDP-N-acetylglucosamine--N-acetylmuramyl-(pentapeptide) pyrophosphoryl-undecaprenol N-acetylglucosamine transferase (353 aa).

Residues 11–13, Arg-164, Ser-194, and Gln-289 contribute to the UDP-N-acetyl-alpha-D-glucosamine site; that span reads SAG.

The protein belongs to the glycosyltransferase 28 family. MurG subfamily.

It is found in the cell membrane. The enzyme catalyses di-trans,octa-cis-undecaprenyl diphospho-N-acetyl-alpha-D-muramoyl-L-alanyl-D-glutamyl-meso-2,6-diaminopimeloyl-D-alanyl-D-alanine + UDP-N-acetyl-alpha-D-glucosamine = di-trans,octa-cis-undecaprenyl diphospho-[N-acetyl-alpha-D-glucosaminyl-(1-&gt;4)]-N-acetyl-alpha-D-muramoyl-L-alanyl-D-glutamyl-meso-2,6-diaminopimeloyl-D-alanyl-D-alanine + UDP + H(+). It participates in cell wall biogenesis; peptidoglycan biosynthesis. Its function is as follows. Cell wall formation. Catalyzes the transfer of a GlcNAc subunit on undecaprenyl-pyrophosphoryl-MurNAc-pentapeptide (lipid intermediate I) to form undecaprenyl-pyrophosphoryl-MurNAc-(pentapeptide)GlcNAc (lipid intermediate II). This chain is UDP-N-acetylglucosamine--N-acetylmuramyl-(pentapeptide) pyrophosphoryl-undecaprenol N-acetylglucosamine transferase, found in Clostridium kluyveri (strain ATCC 8527 / DSM 555 / NBRC 12016 / NCIMB 10680 / K1).